Consider the following 1464-residue polypeptide: Sister chromatid cohesion protein PDS5 homolog B-B (1464 aa).

The stretch at 383–419 is one HEAT repeat; sequence LLVNDQLLNFVRERTLDKRWRVRKEAMMGLAQIYKKY. The disordered stretch occupies residues 1126–1464; the sequence is KSTNVLGAVN…MKSELEGPLL (339 aa). Residues 1137–1155 show a composition bias toward polar residues; it reads PLSSAGKQMQSKSSRMETV. Residues 1156 to 1168 show a composition bias toward low complexity; sequence SNASSGSNPSSPG. The span at 1177 to 1186 shows a compositional bias: acidic residues; the sequence is TELDQIEYED. Composition is skewed to basic and acidic residues over residues 1197–1215, 1234–1244, and 1265–1274; these read KKSD…VEKP, ELSKPAQEPKS, and WQEKRLKEDL. Residues 1286–1295 show a composition bias toward basic residues; that stretch reads KKGRRGRPPK. Residues 1287–1299 constitute a DNA-binding region (a.T hook 1); it reads KGRRGRPPKSAKM. The span at 1325-1342 shows a compositional bias: acidic residues; it reads PTDEEDHLEISEEQDSEN. Over residues 1347 to 1357 the composition is skewed to basic residues; that stretch reads RKGRGSSKKTP. A compositionally biased stretch (polar residues) spans 1359 to 1373; it reads KSDSTDSALDTSRPT. DNA-binding regions (a.T hook) lie at residues 1375–1387 and 1391–1403; these read QKRR…TPTV and KSHV…VVSK. Basic residues predominate over residues 1390–1400; the sequence is KKSHVGRPRKV. Residues 1425–1435 are compositionally biased toward acidic residues; sequence SNEEETADEEV. The segment covering 1441-1453 has biased composition (basic residues); the sequence is GRRRTAKKRRWIQ. Basic and acidic residues predominate over residues 1455-1464; the sequence is MKSELEGPLL.

This sequence belongs to the PDS5 family. In terms of assembly, interacts with the cohesin complex. Phosphorylated in mitotic cells.

It localises to the nucleus. Functionally, plays a role in androgen-induced proliferative arrest. Required for maintenance of sister chromatid cohesion during mitosis. The polypeptide is Sister chromatid cohesion protein PDS5 homolog B-B (pds5b-b) (Xenopus laevis (African clawed frog)).